The sequence spans 325 residues: Protein FAM50B (325 aa).

N-acetylalanine is present on Ala2. Residues 137–160 form a disordered region; that stretch reads RRAGNLGKNPDVDTSFLPDRDREE.

The protein belongs to the FAM50 family.

In Macaca fascicularis (Crab-eating macaque), this protein is Protein FAM50B (FAM50B).